We begin with the raw amino-acid sequence, 774 residues long: Beta-xylosidase/alpha-L-arabinofuranosidase 1 (774 aa).

The N-terminal stretch at A1–G33 is a signal peptide. N48 and N136 each carry an N-linked (GlcNAc...) asparagine glycan. D303 is a catalytic residue. N437 and N530 each carry an N-linked (GlcNAc...) asparagine glycan.

Belongs to the glycoside hydrolase 3 family. Proteolytically cleaved in roots to form a 65 kDa protein.

Its subcellular location is the secreted. The protein localises to the extracellular space. It localises to the extracellular matrix. It catalyses the reaction Hydrolysis of (1-&gt;4)-beta-D-xylans, to remove successive D-xylose residues from the non-reducing termini.. The enzyme catalyses Hydrolysis of terminal non-reducing alpha-L-arabinofuranoside residues in alpha-L-arabinosides.. A bifunctional beta-xylosidase/alpha-L-arabinosidase, exo-enzyme that acts synergistically with endohydrolases. Releases xylose and arabinose from cell walls. Does not cleave xylan from oat spelts although xylan from oat spelts was degraded to xylose when this enzyme was used in combination with xylanase. Also releases xylose and arabinose from aryl glycosides, xylo-oligosaccharides, arabinan from sugar beet and arabino-oligosaccharides, arabinan from sugar beet and arabinoxylan from wheat. The polypeptide is Beta-xylosidase/alpha-L-arabinofuranosidase 1 (Medicago sativa subsp. varia (Alfalfa)).